We begin with the raw amino-acid sequence, 563 residues long: uncharacterized protein (563 aa).

Positions 30–303 (QSIEIQPEEK…EKSPEKQVEI (274 aa)) are disordered. The segment covering 36–56 (PEEKPSEEKQPEEKSSEEKPK) has biased composition (basic and acidic residues). Positions 61 to 72 (SAINSEKTQKPI) are enriched in polar residues. Composition is skewed to basic and acidic residues over residues 101–115 (TTER…DDKQ), 123–276 (ERGR…EPRP), and 282–303 (EKSP…QVEI).

It belongs to the mimivirus L41 family.

This is an uncharacterized protein from Acanthamoeba polyphaga (Amoeba).